Consider the following 350-residue polypeptide: Lipoyl synthase, mitochondrial (350 aa).

[4Fe-4S] cluster-binding residues include Cys-83, Cys-88, Cys-94, Cys-113, Cys-117, Cys-120, and Ser-328. In terms of domain architecture, Radical SAM core spans 96–317 (GGESGTATAT…EKVGNELGFA (222 aa)).

It belongs to the radical SAM superfamily. Lipoyl synthase family. [4Fe-4S] cluster serves as cofactor.

The protein localises to the mitochondrion. The enzyme catalyses [[Fe-S] cluster scaffold protein carrying a second [4Fe-4S](2+) cluster] + N(6)-octanoyl-L-lysyl-[protein] + 2 oxidized [2Fe-2S]-[ferredoxin] + 2 S-adenosyl-L-methionine + 4 H(+) = [[Fe-S] cluster scaffold protein] + N(6)-[(R)-dihydrolipoyl]-L-lysyl-[protein] + 4 Fe(3+) + 2 hydrogen sulfide + 2 5'-deoxyadenosine + 2 L-methionine + 2 reduced [2Fe-2S]-[ferredoxin]. It participates in protein modification; protein lipoylation via endogenous pathway; protein N(6)-(lipoyl)lysine from octanoyl-[acyl-carrier-protein]: step 2/2. In terms of biological role, catalyzes the radical-mediated insertion of two sulfur atoms into the C-6 and C-8 positions of the octanoyl moiety bound to the lipoyl domains of lipoate-dependent enzymes, thereby converting the octanoylated domains into lipoylated derivatives. This chain is Lipoyl synthase, mitochondrial, found in Trichoplax adhaerens (Trichoplax reptans).